A 568-amino-acid chain; its full sequence is Delta 8-(E)-sphingolipid desaturase (568 aa).

One can recognise a Cytochrome b5 heme-binding domain in the interval 2–77 (DNIISRGEIE…FRKWRIGRID (76 aa)). Heme is bound by residues His37 and His60. 2 helical membrane-spanning segments follow: residues 241–261 (FWSA…AHDA) and 272–292 (LDNI…LGWW). The Histidine box-1 signature appears at 259 to 263 (HDAGH). Residues 296 to 300 (HNVHH) carry the Histidine box-2 motif. The next 3 membrane-spanning stretches (helical) occupy residues 352 to 377 (YLYY…LLGL), 389 to 409 (YFEL…LVGC), and 421 to 441 (IMVS…SHFA). The short motif at 480–484 (QVVHH) is the Histidine box-3 element. The span at 549–560 (ATGEREADEKTY) shows a compositional bias: basic and acidic residues. Residues 549–568 (ATGEREADEKTYRTKSIKNA) are disordered.

The protein belongs to the fatty acid desaturase type 1 family.

It is found in the membrane. The enzyme catalyses an N-acylsphing-4-enine + 2 Fe(II)-[cytochrome b5] + O2 + 2 H(+) = a (4E,8E)-4-sphinga-4,8-dienine ceramide + 2 Fe(III)-[cytochrome b5] + 2 H2O. Its pathway is lipid metabolism; sphingolipid metabolism. Functionally, delta(8)-fatty-acid desaturase which introduces a double bond at the 8-position in the long-chain base (LCB) of ceramides. Required for the formation of the di-unsaturated sphingoid base (E,E)-sphinga-4,8-dienine during glucosylceramide (GluCer) biosynthesis. This chain is Delta 8-(E)-sphingolipid desaturase, found in Lachancea kluyveri (strain ATCC 58438 / CBS 3082 / BCRC 21498 / NBRC 1685 / JCM 7257 / NCYC 543 / NRRL Y-12651) (Yeast).